Here is a 129-residue protein sequence, read N- to C-terminus: Small ribosomal subunit protein uS11 (129 aa).

It belongs to the universal ribosomal protein uS11 family. In terms of assembly, part of the 30S ribosomal subunit. Interacts with proteins S7 and S18. Binds to IF-3.

Located on the platform of the 30S subunit, it bridges several disparate RNA helices of the 16S rRNA. Forms part of the Shine-Dalgarno cleft in the 70S ribosome. The polypeptide is Small ribosomal subunit protein uS11 (Carboxydothermus hydrogenoformans (strain ATCC BAA-161 / DSM 6008 / Z-2901)).